The following is a 1130-amino-acid chain: Putative protein tag-278 (1130 aa).

Disordered regions lie at residues 1–92, 104–129, and 974–1130; these read MSRS…DIDN, VARESSRNTSRNNSPQPAGRETELKR, and NELI…AWKF. Coiled coils occupy residues 121–779 and 805–1061; these read AGRE…EEIK and EERE…ARAK. Basic and acidic residues predominate over residues 983–993; the sequence is RQTDESTSEPH. Residues 999–1011 show a composition bias toward polar residues; that stretch reads SITSHGVFQNFVS. Composition is skewed to basic and acidic residues over residues 1013–1057 and 1068–1081; these read MKDK…EKSP and RLRDRSPAKSKSDN. A compositionally biased stretch (low complexity) spans 1082-1095; sequence LESTPSSSSRNLLS. Over residues 1116–1130 the composition is skewed to basic and acidic residues; sequence TKKDSSSEKRPAWKF.

The protein is Putative protein tag-278 (tag-278) of Caenorhabditis elegans.